A 114-amino-acid chain; its full sequence is Replication initiation control protein YabA (114 aa).

4 residues coordinate Zn(2+): His79, Cys81, Cys95, and Cys98.

This sequence belongs to the YabA family. Homotetramer. Interacts with both DnaA and DnaN, acting as a bridge between these two proteins. Requires Zn(2+) as cofactor.

The protein resides in the cytoplasm. The protein localises to the nucleoid. Its function is as follows. Involved in control of chromosome replication initiation. Inhibits the cooperative binding of DnaA to the oriC region, thus negatively regulating initiation of chromosome replication. Inhibits the ability of DnaA-ATP to form a helix on DNA; does not disassemble preformed DnaA-DNA helices. Decreases the residence time of DnaA on the chromosome at its binding sites (oriC, replication forks and promoter-binding sites). Tethers DnaA to the replication machinery via the DNA polymerase beta sliding clamp subunit (dnaN). Associates with oriC and other DnaA targets on the chromosome in a DnaA-dependent manner. The sequence is that of Replication initiation control protein YabA from Lactobacillus johnsonii (strain CNCM I-12250 / La1 / NCC 533).